Here is a 368-residue protein sequence, read N- to C-terminus: tRNA/tmRNA (uracil-C(5))-methyltransferase (368 aa).

S-adenosyl-L-methionine-binding residues include Gln-190, Tyr-218, Asn-223, Glu-239, and Asp-301. The Nucleophile role is filled by Cys-326. Glu-360 functions as the Proton acceptor in the catalytic mechanism.

It belongs to the class I-like SAM-binding methyltransferase superfamily. RNA M5U methyltransferase family. TrmA subfamily.

It carries out the reaction uridine(54) in tRNA + S-adenosyl-L-methionine = 5-methyluridine(54) in tRNA + S-adenosyl-L-homocysteine + H(+). It catalyses the reaction uridine(341) in tmRNA + S-adenosyl-L-methionine = 5-methyluridine(341) in tmRNA + S-adenosyl-L-homocysteine + H(+). Functionally, dual-specificity methyltransferase that catalyzes the formation of 5-methyluridine at position 54 (m5U54) in all tRNAs, and that of position 341 (m5U341) in tmRNA (transfer-mRNA). This chain is tRNA/tmRNA (uracil-C(5))-methyltransferase, found in Photobacterium profundum (strain SS9).